Reading from the N-terminus, the 343-residue chain is Single-pass membrane and coiled-coil domain-containing protein 2 (343 aa).

Positions 86–99 are enriched in basic and acidic residues; that stretch reads EHDQDLSKQDKQET. The segment at 86–108 is disordered; it reads EHDQDLSKQDKQETDVDEDPQAS. Positions 152–238 form a coiled coil; it reads TEKIDNIIKK…SAKLRMYQME (87 aa). Residues 284-304 traverse the membrane as a helical segment; it reads IFIMFDVLTVTGLLCYILFFG.

Its subcellular location is the membrane. This Homo sapiens (Human) protein is Single-pass membrane and coiled-coil domain-containing protein 2 (SMCO2).